Here is a 229-residue protein sequence, read N- to C-terminus: PKHD-type hydroxylase Nham_1514 (229 aa).

The Fe2OG dioxygenase domain maps to 78–180 (QIFPPLFNRY…RVASFFWLQS (103 aa)). Fe cation-binding residues include His-98, Asp-100, and His-161. Arg-171 is a 2-oxoglutarate binding site.

It depends on Fe(2+) as a cofactor. L-ascorbate is required as a cofactor.

In Nitrobacter hamburgensis (strain DSM 10229 / NCIMB 13809 / X14), this protein is PKHD-type hydroxylase Nham_1514.